The chain runs to 244 residues: Sperm-egg fusion protein Juno (244 aa).

An N-terminal signal peptide occupies residues methionine 1–alanine 19. 8 cysteine pairs are disulfide-bonded: cysteine 27–cysteine 55, cysteine 47–cysteine 95, cysteine 56–cysteine 99, cysteine 79–cysteine 166, cysteine 86–cysteine 137, cysteine 126–cysteine 200, cysteine 130–cysteine 180, and cysteine 143–cysteine 160. The segment at tryptophan 62–leucine 81 is important for interaction with IZUMO1. Residue asparagine 73 is glycosylated (N-linked (GlcNAc...) asparagine). A glycan (N-linked (GlcNAc...) asparagine) is linked at asparagine 185. Glycine 222 carries the GPI-anchor amidated glycine lipid modification. Residues serine 223–proline 244 constitute a propeptide that is removed on maturation.

It belongs to the folate receptor family. In terms of assembly, monomer. Interacts with IZUMO1; the interaction is direct. IZUMO1 and IZUMO1R/JUNO form a complex with 1:1 stoichiometry. Interacts with WDR54. In terms of processing, the protein is rapidly cleaved following fertilization, being only weakly detectable in zona-intact fertilized eggs at telophase II and undetectable at the pronuclear stage. Sheding is probably required to block to polyspermy and ensuring egg fusion with a single sperm. In terms of tissue distribution, widely expressed with higher expression in thymus, spleen and lung. Present at the cell surface of unfertilized oocytes, while it is barely detectable 30 to 40 minutes after fertilization (at protein level).

The protein resides in the cell membrane. In terms of biological role, receptor for IZUMO1 present at the cell surface of oocytes (oolemma), which is essential for species-specific gamete recognition and fertilization. The IZUMO1:IZUMO1R/JUNO interaction is a necessary adhesion event between sperm and egg that is required for fertilization but is not sufficient for cell fusion. The ligand-receptor interaction probably does not act as a membrane 'fusogen'. Does not bind folate. In Mus musculus (Mouse), this protein is Sperm-egg fusion protein Juno.